We begin with the raw amino-acid sequence, 171 residues long: Protein-export protein SecB (171 aa).

The protein belongs to the SecB family. In terms of assembly, homotetramer, a dimer of dimers. One homotetramer interacts with 1 SecA dimer.

It localises to the cytoplasm. Functionally, one of the proteins required for the normal export of preproteins out of the cell cytoplasm. It is a molecular chaperone that binds to a subset of precursor proteins, maintaining them in a translocation-competent state. It also specifically binds to its receptor SecA. The polypeptide is Protein-export protein SecB (Xanthomonas oryzae pv. oryzae (strain MAFF 311018)).